The sequence spans 43 residues: Protein PsbN (43 aa).

A helical membrane pass occupies residues 7–29 (VAIFLSGLLVSFTGYALYTAFGQ).

Belongs to the PsbN family.

It localises to the plastid. The protein resides in the chloroplast thylakoid membrane. Functionally, may play a role in photosystem I and II biogenesis. The chain is Protein PsbN from Draba nemorosa (Woodland whitlowgrass).